A 246-amino-acid polypeptide reads, in one-letter code: Probable phosphatase AHA_1344 (246 aa).

His-8, His-10, His-16, His-41, Glu-74, His-102, His-132, Asp-193, and His-195 together coordinate Zn(2+).

The protein belongs to the PHP family. The cofactor is Zn(2+).

The chain is Probable phosphatase AHA_1344 from Aeromonas hydrophila subsp. hydrophila (strain ATCC 7966 / DSM 30187 / BCRC 13018 / CCUG 14551 / JCM 1027 / KCTC 2358 / NCIMB 9240 / NCTC 8049).